Consider the following 165-residue polypeptide: Mid1-interacting protein 1-like (165 aa).

The tract at residues 46–67 (DQESHASVSHNNNNNNEPSFPN) is disordered.

The protein belongs to the SPOT14 family.

The protein resides in the nucleus. It localises to the cytoplasm. The protein localises to the cytoskeleton. Involved in stabilization of microtubules. May play a role in the regulation of lipogenesis. The sequence is that of Mid1-interacting protein 1-like from Danio rerio (Zebrafish).